Here is a 336-residue protein sequence, read N- to C-terminus: Ferredoxin--NADP reductase (336 aa).

The FAD site is built by aspartate 37, glutamine 45, tyrosine 50, valine 90, phenylalanine 124, aspartate 286, and threonine 327.

It belongs to the ferredoxin--NADP reductase type 2 family. As to quaternary structure, homodimer. The cofactor is FAD.

It catalyses the reaction 2 reduced [2Fe-2S]-[ferredoxin] + NADP(+) + H(+) = 2 oxidized [2Fe-2S]-[ferredoxin] + NADPH. This Enterococcus faecalis (strain ATCC 700802 / V583) protein is Ferredoxin--NADP reductase.